The chain runs to 759 residues: MSAPKKRKSDIHSDDRDHADHQTKKEKHWFEEKSEQNGENRRSSIFKGFLKKVKSSTTLKSTNKSASSSKMDTIANETHLSITSESSITSVESCHSAQFPNVAKNAMLRTLVNRDSFTPVPPPDGESVTFILPEIGSSKLEFTSKMDDAISIESRMSIGSCHTIDEDSASIGSTSVFCTPSRNPLMRNGLRMSTRSVPENQDDMPPALFRSLCNSAVRRVPTSKSEGGGTPMRRSMRMSIQKRNLSSKNMEDVPEEEALTVSNSSIRVDAPIAEEDEEVFGAAKEYFDNNVTSHNDSADEGTCSMSRLSTTSERASGVGGSSIFQGRRSSIFRKIFPGKSESKDRRMSDNNQASEQYMDKKSRRASVVSFNEFTSVSGLSVNDSASKNPKDLTESPQQPKLRKKTASSSNLSQRISSVFRMGSNSTVKLNEYVPSPIVSQSSRRNTLTGNSSISSGVGSIASGTSDQGYGTIGSRSGQSISRCGSRRDDEGKKERTRRLLDRIIISDVPAGELLKLKIEQVKKQKQLEMDELFETQLTESSSSDTSQSENLQFDVVAVDIKADGSPFSTTAATFMDSELSKRVKEEIVSNYRPDRCGSITEYEPELVFVMPEQPQASLKSLNDSVSSNADINLDHLRNVRSGLCKSIEEWKRITKMRESSTMLIYPMFCQSEEEWDSKGTIDAIFLMLDGILMNTKRWMPNGKCILAGVTPNNVILLRNKFDELKLSVAISESDGPASSNDDFDTQSTASTSTVFGAKI.

Disordered regions lie at residues 1–46, 334–361, 379–413, 440–495, and 732–759; these read MSAP…SSIF, KIFP…MDKK, LSVN…NLSQ, QSSR…KKER, and ESDG…GAKI. The segment covering 10–42 has biased composition (basic and acidic residues); that stretch reads DIHSDDRDHADHQTKKEKHWFEEKSEQNGENRR. A compositionally biased stretch (low complexity) spans 448–465; the sequence is TGNSSISSGVGSIASGTS. The span at 473–482 shows a compositional bias: polar residues; sequence GSRSGQSISR. Positions 485-495 are enriched in basic and acidic residues; that stretch reads SRRDDEGKKER. Polar residues predominate over residues 736 to 759; sequence PASSNDDFDTQSTASTSTVFGAKI.

Its subcellular location is the nucleus. It is found in the cytoplasm. The protein localises to the cell cortex. It localises to the cleavage furrow. In terms of biological role, required for formation of the pseudocleavage furrow during the first cleavage of the embryo and also mediates aster-induced furrowing during cytokinesis. Promotes cortical recruitment of ani-1 and nmy-2 during pseudocleavage and cytokinesis and promotes the accumulation of actin at furrowing regions. Regulates establishment of embryonic cell polarity. This is Pseudocleavage protein nop-1 (nop-1) from Caenorhabditis elegans.